We begin with the raw amino-acid sequence, 444 residues long: CRAL-TRIO domain-containing protein C3H8.02 (444 aa).

Phosphoserine is present on Ser-40. Residue Thr-43 is modified to Phosphothreonine. Ser-81 bears the Phosphoserine mark. Residues Asp-171–Tyr-330 enclose the CRAL-TRIO domain. The residue at position 418 (Thr-418) is a Phosphothreonine.

This is CRAL-TRIO domain-containing protein C3H8.02 from Schizosaccharomyces pombe (strain 972 / ATCC 24843) (Fission yeast).